The primary structure comprises 643 residues: Arginine--tRNA ligase, mitochondrial (643 aa).

The 'HIGH' region signature appears at 188–198; that stretch reads PNIAKPFHAGH.

Belongs to the class-I aminoacyl-tRNA synthetase family.

The protein resides in the mitochondrion matrix. The catalysed reaction is tRNA(Arg) + L-arginine + ATP = L-arginyl-tRNA(Arg) + AMP + diphosphate. This Saccharomyces cerevisiae (strain ATCC 204508 / S288c) (Baker's yeast) protein is Arginine--tRNA ligase, mitochondrial (MSR1).